The primary structure comprises 306 residues: D-alanine--D-alanine ligase B (306 aa).

An ATP-grasp domain is found at 101-303; that stretch reads KLLWQGAGLP…FSQLVVRILE (203 aa). 134–189 contacts ATP; sequence ISALGLPLIVKPSREGSSVGMTKVVEENALQGALSLAFQHDDEILIEKWLCGPEFT. Residues aspartate 257, glutamate 270, and asparagine 272 each coordinate Mg(2+).

The protein belongs to the D-alanine--D-alanine ligase family. In terms of assembly, monomer. It depends on Mg(2+) as a cofactor. The cofactor is Mn(2+).

The protein resides in the cytoplasm. The catalysed reaction is 2 D-alanine + ATP = D-alanyl-D-alanine + ADP + phosphate + H(+). Its pathway is cell wall biogenesis; peptidoglycan biosynthesis. Its function is as follows. Cell wall formation. The sequence is that of D-alanine--D-alanine ligase B (ddlB) from Salmonella typhimurium (strain LT2 / SGSC1412 / ATCC 700720).